Reading from the N-terminus, the 374-residue chain is Very late expression factor 1 (374 aa).

The region spanning 169 to 349 (AIDTILNFID…NFDESSSDEE (181 aa)) is the Tyr recombinase domain. Catalysis depends on residues R210, K239, R303, and H326. The disordered stretch occupies residues 328–374 (SPASTKPYLNKYNFDESSSDEESGGNNRDSSTGSSANSSSLYYQTGD). Y335 serves as the catalytic O-(3'-phospho-DNA)-tyrosine intermediate. Over residues 357 to 367 (SSTGSSANSSS) the composition is skewed to low complexity.

Belongs to the 'phage' integrase family.

In terms of biological role, involved in very late gene activation. The sequence is that of Very late expression factor 1 (VLF-1) from Orgyia pseudotsugata (Douglas-fir tussock moth).